The chain runs to 393 residues: Tryptophan synthase beta chain (393 aa).

N6-(pyridoxal phosphate)lysine is present on lysine 85.

It belongs to the TrpB family. Tetramer of two alpha and two beta chains. Requires pyridoxal 5'-phosphate as cofactor.

It carries out the reaction (1S,2R)-1-C-(indol-3-yl)glycerol 3-phosphate + L-serine = D-glyceraldehyde 3-phosphate + L-tryptophan + H2O. It functions in the pathway amino-acid biosynthesis; L-tryptophan biosynthesis; L-tryptophan from chorismate: step 5/5. In terms of biological role, the beta subunit is responsible for the synthesis of L-tryptophan from indole and L-serine. The protein is Tryptophan synthase beta chain (trpB) of Helicobacter pylori (strain ATCC 700392 / 26695) (Campylobacter pylori).